We begin with the raw amino-acid sequence, 364 residues long: Probable dual-specificity RNA methyltransferase RlmN (364 aa).

E107 acts as the Proton acceptor in catalysis. Residues 113-346 (HEYGNSVCVT…ATIRREQGSD (234 aa)) form the Radical SAM core domain. C120 and C351 are joined by a disulfide. [4Fe-4S] cluster-binding residues include C127, C131, and C134. S-adenosyl-L-methionine contacts are provided by residues 177 to 178 (GE), S209, 232 to 234 (SLH), and N308. C351 functions as the S-methylcysteine intermediate in the catalytic mechanism.

Belongs to the radical SAM superfamily. RlmN family. [4Fe-4S] cluster is required as a cofactor.

Its subcellular location is the cytoplasm. The enzyme catalyses adenosine(2503) in 23S rRNA + 2 reduced [2Fe-2S]-[ferredoxin] + 2 S-adenosyl-L-methionine = 2-methyladenosine(2503) in 23S rRNA + 5'-deoxyadenosine + L-methionine + 2 oxidized [2Fe-2S]-[ferredoxin] + S-adenosyl-L-homocysteine. It carries out the reaction adenosine(37) in tRNA + 2 reduced [2Fe-2S]-[ferredoxin] + 2 S-adenosyl-L-methionine = 2-methyladenosine(37) in tRNA + 5'-deoxyadenosine + L-methionine + 2 oxidized [2Fe-2S]-[ferredoxin] + S-adenosyl-L-homocysteine. Its function is as follows. Specifically methylates position 2 of adenine 2503 in 23S rRNA and position 2 of adenine 37 in tRNAs. Confers resistance to some classes of antibiotics. The protein is Probable dual-specificity RNA methyltransferase RlmN of Staphylococcus epidermidis (strain ATCC 35984 / DSM 28319 / BCRC 17069 / CCUG 31568 / BM 3577 / RP62A).